The chain runs to 640 residues: 1-deoxy-D-xylulose-5-phosphate synthase (640 aa).

Residues H79 and 120–122 (GHS) each bind thiamine diphosphate. D151 is a Mg(2+) binding site. Thiamine diphosphate contacts are provided by residues 152-153 (GA), N180, Y287, and E369. Mg(2+) is bound at residue N180.

This sequence belongs to the transketolase family. DXPS subfamily. As to quaternary structure, homodimer. It depends on Mg(2+) as a cofactor. Requires thiamine diphosphate as cofactor.

The enzyme catalyses D-glyceraldehyde 3-phosphate + pyruvate + H(+) = 1-deoxy-D-xylulose 5-phosphate + CO2. It participates in metabolic intermediate biosynthesis; 1-deoxy-D-xylulose 5-phosphate biosynthesis; 1-deoxy-D-xylulose 5-phosphate from D-glyceraldehyde 3-phosphate and pyruvate: step 1/1. In terms of biological role, catalyzes the acyloin condensation reaction between C atoms 2 and 3 of pyruvate and glyceraldehyde 3-phosphate to yield 1-deoxy-D-xylulose-5-phosphate (DXP). The chain is 1-deoxy-D-xylulose-5-phosphate synthase from Thioalkalivibrio sulfidiphilus (strain HL-EbGR7).